A 348-amino-acid polypeptide reads, in one-letter code: Isopentenyl-diphosphate delta-isomerase (348 aa).

9 to 10 (RK) provides a ligand contact to substrate. FMN contacts are provided by residues 68-70 (AMT), Ser98, and Asn127. Gln157 provides a ligand contact to substrate. Glu158 is a Mg(2+) binding site. FMN contacts are provided by residues Lys188, Ser213, Thr218, and 286-287 (AG).

This sequence belongs to the IPP isomerase type 2 family. In terms of assembly, homooctamer. Dimer of tetramers. Requires FMN as cofactor. The cofactor is NADPH. Mg(2+) is required as a cofactor.

Its subcellular location is the cytoplasm. The catalysed reaction is isopentenyl diphosphate = dimethylallyl diphosphate. In terms of biological role, involved in the biosynthesis of isoprenoids. Catalyzes the 1,3-allylic rearrangement of the homoallylic substrate isopentenyl (IPP) to its allylic isomer, dimethylallyl diphosphate (DMAPP). The chain is Isopentenyl-diphosphate delta-isomerase from Limosilactobacillus reuteri subsp. reuteri (strain JCM 1112) (Lactobacillus reuteri).